Reading from the N-terminus, the 482-residue chain is UDP-N-acetylmuramate--L-alanine ligase (482 aa).

Residue 111-117 coordinates ATP; the sequence is GTHGKTT.

Belongs to the MurCDEF family.

It is found in the cytoplasm. The catalysed reaction is UDP-N-acetyl-alpha-D-muramate + L-alanine + ATP = UDP-N-acetyl-alpha-D-muramoyl-L-alanine + ADP + phosphate + H(+). The protein operates within cell wall biogenesis; peptidoglycan biosynthesis. Cell wall formation. In Symbiobacterium thermophilum (strain DSM 24528 / JCM 14929 / IAM 14863 / T), this protein is UDP-N-acetylmuramate--L-alanine ligase.